We begin with the raw amino-acid sequence, 268 residues long: Proenkephalin-A (268 aa).

Positions M1–A24 are cleaved as a signal peptide. Intrachain disulfides connect C26-C48, C30-C52, and C33-C65. The segment at T163–S184 is disordered. 2 propeptides span residues S197 to Q208 and V218 to Q228. Phosphoserine is present on S252.

It belongs to the opioid neuropeptide precursor family. In terms of processing, proenkephalin-A is cleaved by CTSL to generate Met-enkephalin. Processed and degraded by ACE. Post-translationally, probably cleaved by ACE. In terms of processing, processed by ACE to generate Met-enkephalin in the nucleus accumbens of the brain. The N-terminal domain contains 6 conserved cysteines thought to be involved in disulfide bonding and/or processing. Spermatogenic and somatic cells.

It is found in the cytoplasmic vesicle. Its subcellular location is the secretory vesicle. The protein resides in the chromaffin granule lumen. The protein localises to the secreted. Neuropeptide that competes with and mimic the effects of opiate drugs. They play a role in a number of physiologic functions, including pain perception and responses to stress. Functionally, met-enkephalin-Arg-Phe neuropeptide acts as a strong ligand of Mu-type opioid receptor OPRM1. Met-enkephalin-Arg-Phe-binding to OPRM1 in the nucleus accumbens of the brain increases activation of OPRM1, leading to long-term synaptic depression of glutamate release. In terms of biological role, increases glutamate release in the striatum and decreases GABA concentration in the striatum. Its function is as follows. Increases glutamate release in the striatum. In Mus musculus (Mouse), this protein is Proenkephalin-A (Penk).